A 484-amino-acid polypeptide reads, in one-letter code: Transmembrane protein 161B (484 aa).

A helical membrane pass occupies residues Leu108–Val128. N-linked (GlcNAc...) asparagine glycosylation is present at Asn136. 2 helical membrane-spanning segments follow: residues Ile137–Thr157 and Ser170–Thr190. Asn204 carries N-linked (GlcNAc...) asparagine glycosylation. 4 helical membrane-spanning segments follow: residues Phe229–Leu249, Val266–Val286, Val368–His388, and Leu456–Phe476.

This sequence belongs to the TMEM161 family.

The protein localises to the cell membrane. Its function is as follows. Essential for maintaining normal cardiac rhythm in the developing heart and for neonatal survival. Inhibits potassium and calcium currents in the cardiomyocytes, this assists in timely action potential repolarization and thereby maintains normal cardiac rhythm. The protein is Transmembrane protein 161B (tmem161b) of Danio rerio (Zebrafish).